Reading from the N-terminus, the 370-residue chain is Sensor histidine kinase DesK (370 aa).

At 1–10 (MIKNHFTFQK) the chain is on the extracellular side. The chain crosses the membrane as a helical span at residues 11-31 (LNGITPYIWTIFFILPFYFIW). Residues 32–36 (KSSST) are Cytoplasmic-facing. The chain crosses the membrane as a helical span at residues 37-57 (FVIIVGIILTLLFFSVYRFAF). Over 58-70 (VSKGWTIYLWGFL) the chain is Extracellular. A helical transmembrane segment spans residues 71–91 (LIGISTASITLFSYIYFAFFI). Residues 92–103 (AYFIGNIKERVP) lie on the Cytoplasmic side of the membrane. The chain crosses the membrane as a helical span at residues 104 to 124 (FHILYYVHLISAAVAANFSLV). The Extracellular segment spans residues 125–128 (LKKE). The helical transmembrane segment at 129–149 (FFLTQIPFVVITLISAILLPF) threads the bilayer. At 150-370 (SIKSRKERER…LTMAIPNNSK (221 aa)) the chain is on the cytoplasmic side. The Histidine kinase domain maps to 186 to 369 (DLHDTLGQKL…KLTMAIPNNS (184 aa)). H188 bears the Phosphohistidine; by autocatalysis mark.

The protein resides in the cell membrane. It carries out the reaction ATP + protein L-histidine = ADP + protein N-phospho-L-histidine.. Its function is as follows. Member of the two-component regulatory system DesR/DesK, responsible for cold induction of the des gene coding for the Delta5 acyl-lipid desaturase. Acts as a sensor of the membrane fluidity. Probably activates DesR by phosphorylation. This Bacillus subtilis (strain 168) protein is Sensor histidine kinase DesK (desK).